The sequence spans 320 residues: Coproporphyrin III ferrochelatase (320 aa).

Positions 194 and 273 each coordinate Fe(2+).

This sequence belongs to the ferrochelatase family.

Its subcellular location is the cytoplasm. The catalysed reaction is Fe-coproporphyrin III + 2 H(+) = coproporphyrin III + Fe(2+). It participates in porphyrin-containing compound metabolism; protoheme biosynthesis. Its function is as follows. Involved in coproporphyrin-dependent heme b biosynthesis. Catalyzes the insertion of ferrous iron into coproporphyrin III to form Fe-coproporphyrin III. The sequence is that of Coproporphyrin III ferrochelatase from Symbiobacterium thermophilum (strain DSM 24528 / JCM 14929 / IAM 14863 / T).